Reading from the N-terminus, the 507-residue chain is Alkyl hydroperoxide reductase subunit F (507 aa).

Position 207 to 222 (207 to 222 (DVLIVGGGPASGSAAI)) interacts with FAD. C335 and C338 are disulfide-bonded. 347-361 (DVAVIGGGNSGVEAA) lines the NAD(+) pocket. 467-477 (TNVPGIFAAGD) contacts FAD.

This sequence belongs to the class-II pyridine nucleotide-disulfide oxidoreductase family. Homodimer. Requires FAD as cofactor.

In terms of biological role, serves to protect the cell against DNA damage by alkyl hydroperoxides. It can use either NADH or NADPH as electron donor for direct reduction of redox dyes or of alkyl hydroperoxides when combined with the AhpC protein. In Staphylococcus aureus (strain MSSA476), this protein is Alkyl hydroperoxide reductase subunit F (ahpF).